Consider the following 1426-residue polypeptide: DNA-directed RNA polymerase subunit beta' (1426 aa).

The Zn(2+) site is built by C71, C73, C86, and C89. Mg(2+) is bound by residues D461, D463, and D465. Residues C814, C888, C895, and C898 each contribute to the Zn(2+) site. Residues 1392-1426 (ADPIAAAESAIGLGGGEQPATSETGAGGSDPSEEG) form a disordered region.

Belongs to the RNA polymerase beta' chain family. The RNAP catalytic core consists of 2 alpha, 1 beta, 1 beta' and 1 omega subunit. When a sigma factor is associated with the core the holoenzyme is formed, which can initiate transcription. Mg(2+) is required as a cofactor. The cofactor is Zn(2+).

It catalyses the reaction RNA(n) + a ribonucleoside 5'-triphosphate = RNA(n+1) + diphosphate. DNA-dependent RNA polymerase catalyzes the transcription of DNA into RNA using the four ribonucleoside triphosphates as substrates. This Alkalilimnicola ehrlichii (strain ATCC BAA-1101 / DSM 17681 / MLHE-1) protein is DNA-directed RNA polymerase subunit beta'.